A 331-amino-acid polypeptide reads, in one-letter code: HTH-type transcriptional regulator RipA (331 aa).

An HTH araC/xylS-type domain is found at 112 to 209; sequence RAVAQVLVSN…GATPSTFTTG (98 aa). 2 consecutive DNA-binding regions (H-T-H motif) follow at residues 129 to 150 and 176 to 199; these read EEFA…LKST and ISVV…RRHT.

In terms of biological role, under iron limitation, RipA negatively controls the expression of the acn (aconitase), catA (catechol 1,2 dioxygenase), leuCD (isopropylmalate dehydratase), narKGHJI (nitrite/nitrate transporter and nitrate reductase), sdhCAB (succinate dehydrogenase), pta (phosphotransacetylase) and katA (catalase) genes. Binds to the consensus sequence in the promoter region. The protein is HTH-type transcriptional regulator RipA of Corynebacterium glutamicum (strain ATCC 13032 / DSM 20300 / JCM 1318 / BCRC 11384 / CCUG 27702 / LMG 3730 / NBRC 12168 / NCIMB 10025 / NRRL B-2784 / 534).